The following is a 213-amino-acid chain: Protein-L-isoaspartate O-methyltransferase (213 aa).

Residue Ser61 is part of the active site.

It belongs to the methyltransferase superfamily. L-isoaspartyl/D-aspartyl protein methyltransferase family.

It is found in the cytoplasm. The catalysed reaction is [protein]-L-isoaspartate + S-adenosyl-L-methionine = [protein]-L-isoaspartate alpha-methyl ester + S-adenosyl-L-homocysteine. Its function is as follows. Catalyzes the methyl esterification of L-isoaspartyl residues in peptides and proteins that result from spontaneous decomposition of normal L-aspartyl and L-asparaginyl residues. It plays a role in the repair and/or degradation of damaged proteins. In Maricaulis maris (strain MCS10) (Caulobacter maris), this protein is Protein-L-isoaspartate O-methyltransferase.